The primary structure comprises 219 residues: ATP phosphoribosyltransferase (219 aa).

Belongs to the ATP phosphoribosyltransferase family. Short subfamily. In terms of assembly, heteromultimer composed of HisG and HisZ subunits.

It is found in the cytoplasm. It carries out the reaction 1-(5-phospho-beta-D-ribosyl)-ATP + diphosphate = 5-phospho-alpha-D-ribose 1-diphosphate + ATP. Its pathway is amino-acid biosynthesis; L-histidine biosynthesis; L-histidine from 5-phospho-alpha-D-ribose 1-diphosphate: step 1/9. Its function is as follows. Catalyzes the condensation of ATP and 5-phosphoribose 1-diphosphate to form N'-(5'-phosphoribosyl)-ATP (PR-ATP). Has a crucial role in the pathway because the rate of histidine biosynthesis seems to be controlled primarily by regulation of HisG enzymatic activity. In Syntrophotalea carbinolica (strain DSM 2380 / NBRC 103641 / GraBd1) (Pelobacter carbinolicus), this protein is ATP phosphoribosyltransferase.